The following is a 688-amino-acid chain: Translation initiation factor IF-2 (688 aa).

The segment at 62–103 (EFEVEEKVVRSKKNSNKKKKKGKGNEDKRQDNFAGRQQTQIV) is disordered. Residues 71–83 (RSKKNSNKKKKKG) are compositionally biased toward basic residues. The tr-type G domain maps to 190–359 (ERPAVVTIMG…LLVSEVEEYK (170 aa)). The G1 stretch occupies residues 199-206 (GHVDHGKT). 199–206 (GHVDHGKT) provides a ligand contact to GTP. The segment at 224 to 228 (GITQH) is G2. A G3 region spans residues 245-248 (DTPG). GTP-binding positions include 245-249 (DTPGH) and 299-302 (NKMD). The segment at 299 to 302 (NKMD) is G4. A G5 region spans residues 335–337 (SAI).

This sequence belongs to the TRAFAC class translation factor GTPase superfamily. Classic translation factor GTPase family. IF-2 subfamily.

It is found in the cytoplasm. Its function is as follows. One of the essential components for the initiation of protein synthesis. Protects formylmethionyl-tRNA from spontaneous hydrolysis and promotes its binding to the 30S ribosomal subunits. Also involved in the hydrolysis of GTP during the formation of the 70S ribosomal complex. The protein is Translation initiation factor IF-2 of Bacillus cereus (strain G9842).